We begin with the raw amino-acid sequence, 357 residues long: Molybdenum import ATP-binding protein ModC (357 aa).

The region spanning 1–233 (MRLEVEARLR…PFPTSGPGRR (233 aa)) is the ABC transporter domain. 31–38 (GRSGSGKT) serves as a coordination point for ATP. Residues 293-357 (GISALNVLPG…AVVKTVALDY (65 aa)) enclose the Mop domain.

The protein belongs to the ABC transporter superfamily. Molybdate importer (TC 3.A.1.8) family. As to quaternary structure, the complex is composed of two ATP-binding proteins (ModC), two transmembrane proteins (ModB) and a solute-binding protein (ModA).

The protein localises to the cell inner membrane. It catalyses the reaction molybdate(out) + ATP + H2O = molybdate(in) + ADP + phosphate + H(+). Its function is as follows. Part of the ABC transporter complex ModABC involved in molybdenum import. Responsible for energy coupling to the transport system. In Rhizobium meliloti (strain 1021) (Ensifer meliloti), this protein is Molybdenum import ATP-binding protein ModC.